A 342-amino-acid polypeptide reads, in one-letter code: Oxygen-dependent coproporphyrinogen-III oxidase (342 aa).

Serine 98 is a binding site for substrate. A divalent metal cation is bound by residues histidine 102 and histidine 112. Histidine 112 acts as the Proton donor in catalysis. Residue 114-116 (NYR) coordinates substrate. A divalent metal cation is bound by residues histidine 146 and histidine 176. An important for dimerization region spans residues 266–301 (YVEFNLVWDRGTIFGLQTNGRTESILMSLPPLARWE).

This sequence belongs to the aerobic coproporphyrinogen-III oxidase family. Homodimer. A divalent metal cation is required as a cofactor.

It localises to the cytoplasm. The catalysed reaction is coproporphyrinogen III + O2 + 2 H(+) = protoporphyrinogen IX + 2 CO2 + 2 H2O. The protein operates within porphyrin-containing compound metabolism; protoporphyrin-IX biosynthesis; protoporphyrinogen-IX from coproporphyrinogen-III (O2 route): step 1/1. In terms of biological role, involved in the heme and chlorophyll biosynthesis. Catalyzes the aerobic oxidative decarboxylation of propionate groups of rings A and B of coproporphyrinogen-III to yield the vinyl groups in protoporphyrinogen-IX. This Prochlorococcus marinus (strain MIT 9312) protein is Oxygen-dependent coproporphyrinogen-III oxidase.